Here is a 507-residue protein sequence, read N- to C-terminus: Maturase K (507 aa).

It belongs to the intron maturase 2 family. MatK subfamily.

It localises to the plastid. Its subcellular location is the chloroplast. Its function is as follows. Usually encoded in the trnK tRNA gene intron. Probably assists in splicing its own and other chloroplast group II introns. In Craterostigma plantagineum (Blue gem), this protein is Maturase K.